We begin with the raw amino-acid sequence, 248 residues long: PF03932 family protein CutC (248 aa).

It belongs to the CutC family.

It is found in the cytoplasm. This chain is PF03932 family protein CutC, found in Porphyromonas gingivalis (strain ATCC 33277 / DSM 20709 / CIP 103683 / JCM 12257 / NCTC 11834 / 2561).